A 329-amino-acid polypeptide reads, in one-letter code: Haptoglobin (329 aa).

Asn9 carries N-linked (GlcNAc...) asparagine glycosylation. Positions 13-70 (VSLPKPPVIENGYVEHMIRYQCKPFYKLHTEGDGVYTLNSEKHWTNKAVGEKLPECEA) constitute a Sushi domain. 2 disulfides stabilise this stretch: Cys34–Cys68 and Cys72–Cys189. Arg84 is a propeptide. The region spanning 85 to 327 (IMGGSVDAKG…VLAWVQETIA (243 aa)) is the Peptidase S1 domain. Asn107 and Asn214 each carry an N-linked (GlcNAc...) asparagine glycan. Disulfide bonds link Cys232-Cys263 and Cys274-Cys304. The tract at residues 241–246 (VPEKKS) is interaction with CD163.

The protein belongs to the peptidase S1 family. Tetramer of two alpha and two beta chains; disulfide-linked. The hemoglobin/haptoglobin complex is composed of a haptoglobin dimer bound to two hemoglobin alpha-beta dimers. Interacts with CD163. Interacts with ERGIC3. Expressed by the liver and secreted in plasma.

The protein localises to the secreted. It localises to the extracellular space. As a result of hemolysis, hemoglobin is found to accumulate in the kidney and is secreted in the urine. Haptoglobin captures, and combines with free plasma hemoglobin to allow hepatic recycling of heme iron and to prevent kidney damage. Haptoglobin also acts as an antioxidant, has antibacterial activity and plays a role in modulating many aspects of the acute phase response. Hemoglobin/haptoglobin complexes are rapidly cleared by the macrophage CD163 scavenger receptor expressed on the surface of liver Kupfer cells through an endocytic lysosomal degradation pathway. The polypeptide is Haptoglobin (HP) (Canis lupus familiaris (Dog)).